The chain runs to 355 residues: UDP-3-O-acylglucosamine N-acyltransferase (355 aa).

Catalysis depends on histidine 258, which acts as the Proton acceptor.

The protein belongs to the transferase hexapeptide repeat family. LpxD subfamily. Homotrimer.

It catalyses the reaction a UDP-3-O-[(3R)-3-hydroxyacyl]-alpha-D-glucosamine + a (3R)-hydroxyacyl-[ACP] = a UDP-2-N,3-O-bis[(3R)-3-hydroxyacyl]-alpha-D-glucosamine + holo-[ACP] + H(+). It participates in bacterial outer membrane biogenesis; LPS lipid A biosynthesis. Its function is as follows. Catalyzes the N-acylation of UDP-3-O-acylglucosamine using 3-hydroxyacyl-ACP as the acyl donor. Is involved in the biosynthesis of lipid A, a phosphorylated glycolipid that anchors the lipopolysaccharide to the outer membrane of the cell. The sequence is that of UDP-3-O-acylglucosamine N-acyltransferase from Bradyrhizobium sp. (strain BTAi1 / ATCC BAA-1182).